A 997-amino-acid chain; its full sequence is FHIP family protein CPIJ015043 (997 aa).

Disordered regions lie at residues 558–579 (DHRS…QQLQ) and 759–922 (NVVL…GGAA). The span at 569-579 (QQHLHQQQQLQ) shows a compositional bias: low complexity. Residues 763–780 (GGSGPGGPRLSNGGGGTG) show a composition bias toward gly residues. Composition is skewed to low complexity over residues 781-792 (SSITSSLSQTTP) and 830-889 (GSNS…MVGS). Residues 911–922 (IGSGTVGGGGAA) show a composition bias toward gly residues.

It belongs to the FHIP family.

This chain is FHIP family protein CPIJ015043, found in Culex quinquefasciatus (Southern house mosquito).